Here is a 233-residue protein sequence, read N- to C-terminus: Adenosine 5'-phosphosulfate reductase (233 aa).

The [4Fe-4S] cluster site is built by C120, C121, C203, and C206. C229 (nucleophile; cysteine thiosulfonate intermediate) is an active-site residue.

Belongs to the PAPS reductase family. CysH subfamily. [4Fe-4S] cluster serves as cofactor.

It localises to the cytoplasm. It carries out the reaction [thioredoxin]-disulfide + sulfite + AMP + 2 H(+) = adenosine 5'-phosphosulfate + [thioredoxin]-dithiol. It functions in the pathway sulfur metabolism; hydrogen sulfide biosynthesis; sulfite from sulfate. Its function is as follows. Catalyzes the formation of sulfite from adenosine 5'-phosphosulfate (APS) using thioredoxin as an electron donor. The sequence is that of Adenosine 5'-phosphosulfate reductase from Lysinibacillus sphaericus (strain C3-41).